A 423-amino-acid polypeptide reads, in one-letter code: SH2 domain-containing adapter protein F (423 aa).

Disordered stretches follow at residues 1-87 (MQQE…STTR), 110-208 (DPFD…WEWK), and 225-312 (DLPW…GEWT). A compositionally biased stretch (acidic residues) spans 192–203 (EDDERPPEEYDQ). At Y201 the chain carries Phosphotyrosine. In terms of domain architecture, SH2 spans 323–418 (WYHGAISRTD…AEHMSLLYPV (96 aa)).

In terms of assembly, interacts with phosphorylated 'Tyr-720' of PDGFRA via its SH2 domain. Post-translationally, may become phosphorylated upon binding to PDGFRA. In terms of tissue distribution, expressed in skeletal muscle, brain, liver, prostate, testis, ovary, small intestine and colon.

Adapter protein which may play a role in the regulation of apoptosis in response to PDGF. This Homo sapiens (Human) protein is SH2 domain-containing adapter protein F.